Here is a 392-residue protein sequence, read N- to C-terminus: Anhydro-N-acetylmuramic acid kinase (392 aa).

Residue Gly22–Asp29 participates in ATP binding.

It belongs to the anhydro-N-acetylmuramic acid kinase family.

The enzyme catalyses 1,6-anhydro-N-acetyl-beta-muramate + ATP + H2O = N-acetyl-D-muramate 6-phosphate + ADP + H(+). The protein operates within amino-sugar metabolism; 1,6-anhydro-N-acetylmuramate degradation. It functions in the pathway cell wall biogenesis; peptidoglycan recycling. Catalyzes the specific phosphorylation of 1,6-anhydro-N-acetylmuramic acid (anhMurNAc) with the simultaneous cleavage of the 1,6-anhydro ring, generating MurNAc-6-P. Is required for the utilization of anhMurNAc either imported from the medium or derived from its own cell wall murein, and thus plays a role in cell wall recycling. The sequence is that of Anhydro-N-acetylmuramic acid kinase from Burkholderia mallei (strain NCTC 10229).